The following is a 350-amino-acid chain: Probable lactoylglutathione lyase, chloroplastic (350 aa).

The N-terminal 61 residues, 1-61 (MVRIIPMAAS…KLLRRSVNCL (61 aa)), are a transit peptide targeting the chloroplast. VOC domains are found at residues 88–212 (RMLH…LLER) and 218–342 (PLCQ…FVDN). Position 91 (His91) interacts with Zn(2+). Residue Arg95 participates in substrate binding. Glu142 contacts Zn(2+). Positions 146 and 160 each coordinate substrate. Zn(2+) is bound by residues His160 and Glu208. Glu208 serves as the catalytic Proton donor/acceptor.

Belongs to the glyoxalase I family. Requires Zn(2+) as cofactor.

It localises to the plastid. The protein resides in the chloroplast stroma. It catalyses the reaction (R)-S-lactoylglutathione = methylglyoxal + glutathione. Its pathway is secondary metabolite metabolism; methylglyoxal degradation; (R)-lactate from methylglyoxal: step 1/2. Functionally, catalyzes the conversion of hemimercaptal, formed from methylglyoxal and glutathione, to S-lactoylglutathione. The chain is Probable lactoylglutathione lyase, chloroplastic from Arabidopsis thaliana (Mouse-ear cress).